The following is an 86-amino-acid chain: Co-chaperonin GroES (86 aa).

It belongs to the GroES chaperonin family. As to quaternary structure, heptamer of 7 subunits arranged in a ring. Interacts with the chaperonin GroEL.

The protein localises to the cytoplasm. In terms of biological role, together with the chaperonin GroEL, plays an essential role in assisting protein folding. The GroEL-GroES system forms a nano-cage that allows encapsulation of the non-native substrate proteins and provides a physical environment optimized to promote and accelerate protein folding. GroES binds to the apical surface of the GroEL ring, thereby capping the opening of the GroEL channel. This Campylobacter lari (strain RM2100 / D67 / ATCC BAA-1060) protein is Co-chaperonin GroES.